Consider the following 225-residue polypeptide: Thymidine kinase (225 aa).

8–15 lines the ATP pocket; it reads GPMFSGKT. E92 (proton acceptor) is an active-site residue. Residue Y122 participates in substrate binding. The Zn(2+) site is built by C147 and C150. 167–171 is a binding site for substrate; sequence KILVG. Residues C180 and C183 each contribute to the Zn(2+) site. Over residues 197 to 207 the composition is skewed to polar residues; that stretch reads SEQINNQTELS. Residues 197 to 225 form a disordered region; that stretch reads SEQINNQTELSEPTRQKESLKIKKRRIDS. The segment covering 208–225 has biased composition (basic and acidic residues); the sequence is EPTRQKESLKIKKRRIDS.

It belongs to the thymidine kinase family.

The enzyme catalyses thymidine + ATP = dTMP + ADP + H(+). This is Thymidine kinase (TK) from Acanthamoeba polyphaga mimivirus (APMV).